Consider the following 1132-residue polypeptide: Cytospin-A (1132 aa).

The segment at 1-166 (MKKAGRPVGN…SKSDGQLSDK (166 aa)) is disordered. Composition is skewed to low complexity over residues 73-109 (STHS…SKES) and 119-129 (SRNSSSKKQSS). The span at 150–159 (SESRMSKSKS) shows a compositional bias: basic and acidic residues. Positions 226–268 (DVESTLLLLQEQNQAIRGELNLLKNENRMLKDRLNALGFSLEQ) form a coiled coil. The interval 301 to 381 (ASSVEGSAPG…RKGSSGNTSE (81 aa)) is disordered. A compositionally biased stretch (polar residues) spans 333 to 343 (SEVYQAVTSSD). Residues 348-377 (APSGCGSSSSSESEGGPPACRSSSRKGSSG) are compositionally biased toward low complexity. Coiled coils occupy residues 385-440 (ACLT…MDSL) and 478-798 (RYME…RGRV). Disordered regions lie at residues 869–895 (TSTT…AAAV) and 939–1016 (SRPA…RKDP). A compositionally biased stretch (pro residues) spans 875-889 (APLPRTPLSPSPMKT). The segment covering 946 to 961 (QRVSNMDTSKTITVSR) has biased composition (polar residues). Basic and acidic residues predominate over residues 962–972 (RSSEEPKRDIS). The segment covering 979-1000 (ASSLISMSSAAALSSSSSPTAS) has biased composition (low complexity). In terms of domain architecture, Calponin-homology (CH) spans 1026 to 1131 (GSKRNALLRW…YVTSIYKYFE (106 aa)).

It belongs to the cytospin-A family. As to quaternary structure, may interact with both microtubules and actin cytoskeleton.

Its subcellular location is the cytoplasm. The protein resides in the cytoskeleton. It localises to the spindle. The protein localises to the cell junction. It is found in the gap junction. Its function is as follows. Involved in cytokinesis and spindle organization. May play a role in actin cytoskeleton organization and microtubule stabilization and hence required for proper cell adhesion and migration. In Danio rerio (Zebrafish), this protein is Cytospin-A (specc1la).